The chain runs to 463 residues: Hexokinase-7 (463 aa).

Positions 7-456 (AAAEQVVAAL…SGLGAALIAA (450 aa)) constitute a Hexokinase domain. The interval 62–199 (NGTEEGLFYA…GLDMRVSALI (138 aa)) is hexokinase small subdomain. ADP is bound by residues G76, T77, and N78. D-glucose contacts are provided by T165, K166, N200, and D201. The tract at residues 200 to 445 (NDTVGTLAAG…KSVAVKLAND (246 aa)) is hexokinase large subdomain. Residue T224 coordinates ADP. Residues N227, E255, and E286 each coordinate D-glucose. G410 is an ADP binding site.

Belongs to the hexokinase family. As to expression, expressed in roots, leaves, flowers, immature seeds and seed coat.

Its subcellular location is the cytoplasm. It carries out the reaction a D-hexose + ATP = a D-hexose 6-phosphate + ADP + H(+). The catalysed reaction is D-fructose + ATP = D-fructose 6-phosphate + ADP + H(+). The enzyme catalyses D-glucose + ATP = D-glucose 6-phosphate + ADP + H(+). It participates in carbohydrate metabolism; hexose metabolism. It functions in the pathway carbohydrate degradation; glycolysis; D-glyceraldehyde 3-phosphate and glycerone phosphate from D-glucose: step 1/4. Fructose and glucose phosphorylating enzyme. Functions in sugar signaling via a glycolysis-dependent manner under aerobic conditions, but its signaling role is suppressed when oxygen is deficient. The sequence is that of Hexokinase-7 (HXK7) from Oryza sativa subsp. japonica (Rice).